A 532-amino-acid polypeptide reads, in one-letter code: Pentatricopeptide repeat-containing protein At4g02820, mitochondrial (532 aa).

The N-terminal 28 residues, M1–T28, are a transit peptide targeting the mitochondrion. Residues P35–V56 are disordered. PPR repeat units follow at residues G161 to K195, S196 to R226, D230 to P264, D265 to L295, N300 to S330, N335 to V365, D370 to P404, S405 to S435, N442 to A472, and N476 to T512.

Belongs to the PPR family. P subfamily.

The protein localises to the mitochondrion. The chain is Pentatricopeptide repeat-containing protein At4g02820, mitochondrial from Arabidopsis thaliana (Mouse-ear cress).